The sequence spans 204 residues: Ribosome maturation factor RimP (204 aa).

Belongs to the RimP family.

It is found in the cytoplasm. Functionally, required for maturation of 30S ribosomal subunits. The chain is Ribosome maturation factor RimP from Allorhizobium ampelinum (strain ATCC BAA-846 / DSM 112012 / S4) (Agrobacterium vitis (strain S4)).